The sequence spans 507 residues: ATP synthase subunit alpha, chloroplastic (507 aa).

170–177 is an ATP binding site; that stretch reads GDRQTGKT.

The protein belongs to the ATPase alpha/beta chains family. In terms of assembly, F-type ATPases have 2 components, CF(1) - the catalytic core - and CF(0) - the membrane proton channel. CF(1) has five subunits: alpha(3), beta(3), gamma(1), delta(1), epsilon(1). CF(0) has four main subunits: a, b, b' and c.

It localises to the plastid. Its subcellular location is the chloroplast thylakoid membrane. The enzyme catalyses ATP + H2O + 4 H(+)(in) = ADP + phosphate + 5 H(+)(out). Its function is as follows. Produces ATP from ADP in the presence of a proton gradient across the membrane. The alpha chain is a regulatory subunit. This is ATP synthase subunit alpha, chloroplastic from Solanum bulbocastanum (Wild potato).